Here is a 261-residue protein sequence, read N- to C-terminus: MKGEAYYSVRMRASENGPHEEGGKHISGGERLVPFIGLNDAVSDLLEKGMSHSRGRPDFMQIQFDLVNEPIKLVQPLRIETNETVSAEEGQALARELISRAGVPESAVEKAFQGIAEYWGVRGAVLFDIHSGRRIDGRKEKGVRVSRLDWPEADFQRWAALCGVPPNPRLKEALAIASKVCEHPAVIAELCWSDDPDYITGYVAAKKLGYQRMTKMKEHGDESGCRIFFVDGSADVKSCIDDLEKQPVFIGQEVNHESIIR.

The protein belongs to the BioW family. In terms of assembly, homodimer. Mg(2+) serves as cofactor.

It carries out the reaction heptanedioate + ATP + CoA = 6-carboxyhexanoyl-CoA + AMP + diphosphate. It participates in metabolic intermediate metabolism; pimeloyl-CoA biosynthesis; pimeloyl-CoA from pimelate: step 1/1. Functionally, catalyzes the transformation of pimelate into pimeloyl-CoA with concomitant hydrolysis of ATP to AMP. This is 6-carboxyhexanoate--CoA ligase from Bacillus licheniformis (strain ATCC 14580 / DSM 13 / JCM 2505 / CCUG 7422 / NBRC 12200 / NCIMB 9375 / NCTC 10341 / NRRL NRS-1264 / Gibson 46).